A 442-amino-acid polypeptide reads, in one-letter code: tRNA-2-methylthio-N(6)-dimethylallyladenosine synthase (442 aa).

Positions 5-122 constitute an MTTase N-terminal domain; sequence KKVFIKTLGC…LPEMIKQKQK (118 aa). 6 residues coordinate [4Fe-4S] cluster: C14, C51, C85, C159, C163, and C166. Residues 145–378 enclose the Radical SAM core domain; it reads KAEGAKAYVS…DLLNSNAQII (234 aa). Residues 380-442 form the TRAM domain; that stretch reads RQMVGTNQRI…LPNSLRGELI (63 aa).

Belongs to the methylthiotransferase family. MiaB subfamily. In terms of assembly, monomer. [4Fe-4S] cluster serves as cofactor.

The protein resides in the cytoplasm. It carries out the reaction N(6)-dimethylallyladenosine(37) in tRNA + (sulfur carrier)-SH + AH2 + 2 S-adenosyl-L-methionine = 2-methylsulfanyl-N(6)-dimethylallyladenosine(37) in tRNA + (sulfur carrier)-H + 5'-deoxyadenosine + L-methionine + A + S-adenosyl-L-homocysteine + 2 H(+). In terms of biological role, catalyzes the methylthiolation of N6-(dimethylallyl)adenosine (i(6)A), leading to the formation of 2-methylthio-N6-(dimethylallyl)adenosine (ms(2)i(6)A) at position 37 in tRNAs that read codons beginning with uridine. This chain is tRNA-2-methylthio-N(6)-dimethylallyladenosine synthase, found in Francisella tularensis subsp. tularensis (strain FSC 198).